The chain runs to 248 residues: Granzyme E (248 aa).

The N-terminal stretch at 1–18 (MPPVLILLTLLLPLGAGA) is a signal peptide. Residues 19–20 (EE) constitute a propeptide that is removed on maturation. The Peptidase S1 domain occupies 21-246 (IIGGHVVKPH…FLPWISRNMK (226 aa)). A disulfide bridge connects residues Cys50 and Cys66. The active-site Charge relay system is His65. Asn68 and Asn102 each carry an N-linked (GlcNAc...) asparagine glycan. Residue Asp109 is the Charge relay system of the active site. Disulfide bonds link Cys143–Cys210 and Cys175–Cys189. Asn154 carries an N-linked (GlcNAc...) asparagine glycan. Ser204 functions as the Charge relay system in the catalytic mechanism. An N-linked (GlcNAc...) asparagine glycan is attached at Asn223.

This sequence belongs to the peptidase S1 family. Granzyme subfamily.

Its subcellular location is the cytolytic granule. Functionally, this enzyme is probably necessary for target cell lysis in cell-mediated immune responses. The polypeptide is Granzyme E (Gzme) (Mus musculus (Mouse)).